A 178-amino-acid polypeptide reads, in one-letter code: Large ribosomal subunit protein uL6c (178 aa).

The protein belongs to the universal ribosomal protein uL6 family. As to quaternary structure, part of the 50S ribosomal subunit.

It localises to the plastid. It is found in the chloroplast. In terms of biological role, binds 23S rRNA. The polypeptide is Large ribosomal subunit protein uL6c (rpl6) (Phaeodactylum tricornutum (strain CCAP 1055/1)).